An 871-amino-acid chain; its full sequence is DNA mismatch repair protein MutS (871 aa).

ATP is bound at residue 617-624; that stretch reads GPNMGGKS.

The protein belongs to the DNA mismatch repair MutS family.

Its function is as follows. This protein is involved in the repair of mismatches in DNA. It is possible that it carries out the mismatch recognition step. This protein has a weak ATPase activity. The sequence is that of DNA mismatch repair protein MutS from Hydrogenovibrio crunogenus (strain DSM 25203 / XCL-2) (Thiomicrospira crunogena).